The primary structure comprises 620 residues: MKPAKQTTASLAFLAMGIVYGDIGTSPLYAFKEVFFSHHPLAINPDNVLGILSLVFWAFVLIVSIKYLLLVTRADQNGEGGILTLSAIAQQNAPKPWRRIAMLLGILATGFFFGEAVITPAMSVLSAVEGIAVAQPDLAPYVLPIAMMIIVALFAVQAMGTERIGRFFAPVMLLWFLVLALLGAHAIWHAPQVLRALNPAYAVHFVLLHGQHTLFILGLVVLSVTGVEALYADMGHFGIKPIRIAWFALVMPSLLLNYFGQGAYLLTLSAPTGSTFFSLAPKAWLWPLILLATFATVIASQAVISGIFSLARQAINYGYLPPMKIAHTSEHSQGQIYVPAANMLLFVAVIFVMLRFRSSANLAAAYGIAVTAIMMISSLLLVLVARYQWQWRWPRVVTIGIAFIGMDTLLLASTSTKLMEGGWLPLLLGCVVFIVMYIWQQQRQRLLEIAGNELSVSAMIQSLEEESFQRAAGTAVYLSRSLNHVPRSLLHNIKYNKTLHERNVLMTFQYEAVPRVHPCRRAEIEQVSASFWQVVIHIGYQEEPDMAQVMHCCGLKGLYLHPNETLFLLSSERLKVQKLGMWHDLKVWFFIQMSKHALRTSERLNIPPDRLIEMGVYREM.

12 helical membrane passes run 11 to 31 (LAFLAMGIVYGDIGTSPLYAF), 51 to 71 (ILSLVFWAFVLIVSIKYLLLV), 100 to 120 (IAMLLGILATGFFFGEAVITP), 138 to 158 (LAPYVLPIAMMIIVALFAVQA), 167 to 187 (FFAPVMLLWFLVLALLGAHAI), 202 to 222 (AVHFVLLHGQHTLFILGLVVL), 246 to 266 (WFALVMPSLLLNYFGQGAYLL), 288 to 308 (LILLATFATVIASQAVISGIF), 334 to 354 (GQIYVPAANMLLFVAVIFVML), 364 to 384 (AAYGIAVTAIMMISSLLLVLV), 396 to 416 (VVTIGIAFIGMDTLLLASTST), and 418 to 438 (LMEGGWLPLLLGCVVFIVMYI).

Belongs to the HAK/KUP transporter (TC 2.A.72) family.

The protein resides in the cell inner membrane. It catalyses the reaction K(+)(in) + H(+)(in) = K(+)(out) + H(+)(out). Its function is as follows. Transport of potassium into the cell. Likely operates as a K(+):H(+) symporter. The chain is Probable potassium transport system protein Kup from Vibrio cholerae serotype O1 (strain ATCC 39541 / Classical Ogawa 395 / O395).